The sequence spans 170 residues: Cyclic pyranopterin monophosphate synthase (170 aa).

The tract at residues 1 to 25 (MADPSTLTHPDPEGGVRMMDASQKS) is disordered. Residues 78 to 80 (LCH) and 116 to 117 (ME) each bind substrate. Aspartate 131 is an active-site residue.

This sequence belongs to the MoaC family. In terms of assembly, homohexamer; trimer of dimers.

It carries out the reaction (8S)-3',8-cyclo-7,8-dihydroguanosine 5'-triphosphate = cyclic pyranopterin phosphate + diphosphate. It functions in the pathway cofactor biosynthesis; molybdopterin biosynthesis. Functionally, catalyzes the conversion of (8S)-3',8-cyclo-7,8-dihydroguanosine 5'-triphosphate to cyclic pyranopterin monophosphate (cPMP). This chain is Cyclic pyranopterin monophosphate synthase, found in Salinibacter ruber (strain DSM 13855 / M31).